Consider the following 42-residue polypeptide: Daisho1 (42 aa).

The signal sequence occupies residues methionine 1–alanine 20. The propeptide at glutamate 21 to proline 26 is removed by a dipeptidylpeptidase. A Threonine amide modification is found at threonine 41.

In terms of tissue distribution, hemolymph (at protein level).

It localises to the secreted. Functionally, peptide which plays a role in the humoral immune response to a subset of filamentous fungi, including F.oxysporum and F.verticillioides. This is Daisho1 from Drosophila melanogaster (Fruit fly).